The chain runs to 28 residues: Dermaseptin-2 (28 aa).

Position 28 is a glutamine amide (glutamine 28).

Belongs to the frog skin active peptide (FSAP) family. Dermaseptin subfamily. Expressed by the skin glands.

It is found in the secreted. Antimicrobial peptide with activity against the Gram-positive bacterium S.aureus, and the Gram-negative bacteria E.coli and P.aeruginosa. Probably acts by disturbing membrane functions with its amphipathic structure. Has an activity of stimulation of insulin release, which may protect the species from being eaten by predators by causing fatal hypoglycemia. Has hemolytic activity (60% hemolysis at 128 ug/ml). In Phyllomedusa tarsius (Brownbelly leaf frog), this protein is Dermaseptin-2.